Consider the following 142-residue polypeptide: HTH-type transcriptional regulator MntR (142 aa).

Residues 1–63 (MPTPSMEDYI…YEKYRGLILT (63 aa)) enclose the HTH dtxR-type domain. Asp8, Glu11, His77, Glu99, Glu102, and His103 together coordinate Mn(2+).

This sequence belongs to the DtxR/MntR family. As to quaternary structure, homodimer.

The protein resides in the cytoplasm. Its activity is regulated as follows. DNA binding is strongly activated by Mn(2+). Central regulator of manganese homeostasis. This is HTH-type transcriptional regulator MntR from Listeria monocytogenes serotype 4b (strain CLIP80459).